Consider the following 132-residue polypeptide: Small ribosomal subunit protein uS9 (132 aa).

It belongs to the universal ribosomal protein uS9 family.

The sequence is that of Small ribosomal subunit protein uS9 (rpsI) from Mycoplasma genitalium (strain ATCC 33530 / DSM 19775 / NCTC 10195 / G37) (Mycoplasmoides genitalium).